Consider the following 266-residue polypeptide: Gasdermin bGSDM (266 aa).

Cys-6 is lipidated: S-palmitoyl cysteine. 4 beta stranded membrane-spanning segments follow: residues 70 to 86, 99 to 117, 163 to 180, and 189 to 205; these read ISHSETSRKSLQAAGNF, APKLDLSFARGAVVTFSFS, AIDMTLATDGSAKVDVQA, and LGGKAECEVKSSTTISF. Positions 245-266 are C-terminal region; the sequence is GAAEPYLLRRGQVLIVEDMQAT.

This sequence belongs to the bacterial gasdermin family. Monomer. In terms of assembly, forms large, homooligomeric ring-shaped pores when inserted in membranes. Post-translationally, cleavage by the adjacently encoded protease (probably ISF6_0256) predicted to occur between Glu-244 and Gly-245 relieves autoinhibition, releasing the N-terminus which initiates loss of cell integrity. In terms of processing, palmitoylation helps stabilize the inactive state; may self palmitoylate. Palmitoylation plays a significant role in pore formation.

It localises to the cytoplasm. It is found in the cell inner membrane. Its activity is regulated as follows. The full-length protein before cleavage is inactive: intramolecular interactions between the N-terminal domain and the C-terminal region as well as the lipid modification, mediate autoinhibition. The pyroptosis-like-inducing activity is carried by the released N-terminal domain (Gasdermin bGSDM, N-terminus). Its function is as follows. Precursor of a pore-forming protein involved in defense against bacteriophages. Cleavage of this precursor by its dedicated, neighboring protease (probably ISF6_0256) releases the active moiety (gasdermin bGSDM, N-terminus) which inserts into membranes, forming pores and triggering cell death. In terms of biological role, pore-forming protein that causes membrane permeabilization via a pyroptosis-like activity. Makes ring-like pores with an interior pore diameter of 300-400 Angstroms, when integrated in liposomes. The sequence is that of Gasdermin bGSDM from Piscinibacter sakaiensis (Ideonella sakaiensis).